The chain runs to 547 residues: MELCVISTTTTVKAINPFLPSITRRVSSRLFQSDSVLQFGGRLKKPISRPLDMSCVSRKIGFFGDFMSHGGNFRLFAAASPAVETSVKEDKLPADLKVTETVQANSSVKLSVEVPEIVCEDCYQRVLTEFMKLSKVPGFRPKTRVPENIIVGFVGRQYVLRATVESILKRTLPHAMESVTGRALKDSIQIVSSFPDMEKAYSKLKTLSYEVVVDVVPELKWNPEDGYKNMKVVVELGDEIDAKKACERQLRQKYKSLGALKIVTERGLQVGDLAVVDISATTIDEDGSTGQAIPDAESKGFHFDTEEGNRLLPGFLDAIIGIRAGESKSFTLVFPESWKQESLRGQRAQFTVDCKELFYRDLPTLDDSLADKLLPGCTTLKEVEETLAKRCQEMEQEAKEQATDNAILEQIRKMVEVEIPQSLFEEQGRQFYGARLLEIQGNMKLNEDQLASLSSQKAVNEFLETQRESITNIIKQNIAVGDIFKRENLEFSTDELVKEVENSISEFKKHKQEFDEERVKDQVQEILEGAKVLEWLKDRAEIQYITR.

A chloroplast-targeting transit peptide spans 1–77 (MELCVISTTT…SHGGNFRLFA (77 aa)). Position 78 is an N-acetylalanine (Ala78). One can recognise a PPIase FKBP-type domain in the interval 271 to 366 (GDLAVVDISA…LFYRDLPTLD (96 aa)).

The protein belongs to the FKBP-type PPIase family. Tig subfamily.

Its subcellular location is the plastid. It is found in the chloroplast. The enzyme catalyses [protein]-peptidylproline (omega=180) = [protein]-peptidylproline (omega=0). Functionally, involved in protein export. Acts as a chaperone by maintaining the newly synthesized protein in an open conformation. Functions as a peptidyl-prolyl cis-trans isomerase. The sequence is that of Trigger factor-like protein TIG, Chloroplastic (TIG) from Arabidopsis thaliana (Mouse-ear cress).